Consider the following 132-residue polypeptide: UPF0299 membrane protein YohJ (132 aa).

The next 4 membrane-spanning stretches (helical) occupy residues 7-27 (IIWQ…AGIF), 31-51 (LLPV…VLLA), 63-83 (GCYV…VGVM), and 93-113 (FGPV…VVSW).

This sequence belongs to the UPF0299 family.

The protein localises to the cell inner membrane. In Shigella boydii serotype 4 (strain Sb227), this protein is UPF0299 membrane protein YohJ.